A 447-amino-acid polypeptide reads, in one-letter code: N-succinylarginine dihydrolase (447 aa).

Substrate-binding positions include 19-28 (AGLSFGNEAS), Asn110, and 137-138 (HR). Glu174 is a catalytic residue. Position 212 (Arg212) interacts with substrate. His248 is an active-site residue. Residues Asp250 and Asn359 each contribute to the substrate site. Cys365 serves as the catalytic Nucleophile.

The protein belongs to the succinylarginine dihydrolase family. In terms of assembly, homodimer.

The catalysed reaction is N(2)-succinyl-L-arginine + 2 H2O + 2 H(+) = N(2)-succinyl-L-ornithine + 2 NH4(+) + CO2. It participates in amino-acid degradation; L-arginine degradation via AST pathway; L-glutamate and succinate from L-arginine: step 2/5. Functionally, catalyzes the hydrolysis of N(2)-succinylarginine into N(2)-succinylornithine, ammonia and CO(2). The chain is N-succinylarginine dihydrolase from Escherichia coli O139:H28 (strain E24377A / ETEC).